The chain runs to 440 residues: Methionine aminopeptidase 2-2 (440 aa).

The disordered stretch occupies residues 1 to 102 (MAAQVPTEAL…KGQEEEYRDE (102 aa)). Residues 36–46 (DSDDSDEEGEE) show a composition bias toward acidic residues. Residues 56–70 (AKKKKKNKKKKKKKS) are compositionally biased toward basic residues. Histidine 194 serves as a coordination point for substrate. Aspartate 214, aspartate 225, and histidine 294 together coordinate a divalent metal cation. A substrate-binding site is contributed by histidine 302. Residues glutamate 327 and glutamate 421 each contribute to the a divalent metal cation site.

This sequence belongs to the peptidase M24A family. Methionine aminopeptidase eukaryotic type 2 subfamily. Requires Co(2+) as cofactor. The cofactor is Zn(2+). Mn(2+) is required as a cofactor. Fe(2+) serves as cofactor.

The protein resides in the cytoplasm. The enzyme catalyses Release of N-terminal amino acids, preferentially methionine, from peptides and arylamides.. Its function is as follows. Cotranslationally removes the N-terminal methionine from nascent proteins. The N-terminal methionine is often cleaved when the second residue in the primary sequence is small and uncharged (Met-Ala-, Cys, Gly, Pro, Ser, Thr, or Val). In Colletotrichum graminicola (strain M1.001 / M2 / FGSC 10212) (Maize anthracnose fungus), this protein is Methionine aminopeptidase 2-2.